The sequence spans 131 residues: Neurophysin 2 (131 aa).

Disulfide bonds link Cys-10-Cys-55, Cys-13-Cys-27, Cys-21-Cys-45, Cys-28-Cys-35, Cys-62-Cys-74, Cys-68-Cys-86, and Cys-75-Cys-80.

It belongs to the vasopressin/oxytocin family.

The protein resides in the secreted. Functionally, neurophysin 2 specifically binds vasopressin. This chain is Neurophysin 2, found in Anser anser anser (Western greylag goose).